Reading from the N-terminus, the 310-residue chain is MFKTEPFIEESIEEIRKQINNRKTIIALSGGVDSAVAAVLTDRAVGDKLLAVYVDTGLMRKNESEEIWKIFKEQMGLNLKIVEAKDIFLKELEGVIDPEEKRKIIGRLFIEVFEKVAEEQGEEVLVQGTIAPDWIESEGQIKTHHNIALPGGMVLDVVEPLRELYKDEVRLLAVALGLPDQIAHRQPFPGPGLAVRILGEITDEKLAICKEANFIVSEEIEKTELKNELWQYFAAVLDTKATGVKGDIRDYNWVVALRFVSSLDAMTAHTPEIPFDLIKKISKRITSEIPNVTRVVLDVTDKPPATIEFE.

A GMPS ATP-PPase domain is found at 2 to 185 (FKTEPFIEES…LGLPDQIAHR (184 aa)). 29–35 (SGGVDSA) contributes to the ATP binding site.

Heterodimer composed of a glutamine amidotransferase subunit (A) and a GMP-binding subunit (B).

The catalysed reaction is XMP + L-glutamine + ATP + H2O = GMP + L-glutamate + AMP + diphosphate + 2 H(+). The protein operates within purine metabolism; GMP biosynthesis; GMP from XMP (L-Gln route): step 1/1. Catalyzes the synthesis of GMP from XMP. This Methanococcus maripaludis (strain DSM 14266 / JCM 13030 / NBRC 101832 / S2 / LL) protein is GMP synthase [glutamine-hydrolyzing] subunit B.